Here is a 239-residue protein sequence, read N- to C-terminus: NAD-dependent protein deacylase (239 aa).

The Deacetylase sirtuin-type domain maps to methionine 1 to lysine 234. NAD(+)-binding positions include glycine 11 to tryptophan 30 and glutamine 89 to aspartate 92. Histidine 107 (proton acceptor) is an active-site residue. Zn(2+) contacts are provided by cysteine 115, cysteine 118, cysteine 136, and cysteine 139. Residues glycine 176–serine 178, asparagine 202–glutamate 204, and alanine 220 contribute to the NAD(+) site.

It belongs to the sirtuin family. Class III subfamily. It depends on Zn(2+) as a cofactor.

It localises to the cytoplasm. It carries out the reaction N(6)-acetyl-L-lysyl-[protein] + NAD(+) + H2O = 2''-O-acetyl-ADP-D-ribose + nicotinamide + L-lysyl-[protein]. In terms of biological role, NAD-dependent protein deacetylase which modulates the activities of several proteins which are inactive in their acetylated form. The sequence is that of NAD-dependent protein deacylase from Aquifex aeolicus (strain VF5).